The chain runs to 429 residues: Ribosomal RNA small subunit methyltransferase B (429 aa).

S-adenosyl-L-methionine-binding positions include 254 to 260, aspartate 277, aspartate 303, and aspartate 322; that span reads CAAPGGK. Catalysis depends on cysteine 375, which acts as the Nucleophile. The segment at 397–419 is disordered; that stretch reads ALSETGTPDQPGQQNLPGGEEGD. The segment covering 400–412 has biased composition (polar residues); it reads ETGTPDQPGQQNL.

Belongs to the class I-like SAM-binding methyltransferase superfamily. RsmB/NOP family.

The protein resides in the cytoplasm. It catalyses the reaction cytidine(967) in 16S rRNA + S-adenosyl-L-methionine = 5-methylcytidine(967) in 16S rRNA + S-adenosyl-L-homocysteine + H(+). In terms of biological role, specifically methylates the cytosine at position 967 (m5C967) of 16S rRNA. This Salmonella choleraesuis (strain SC-B67) protein is Ribosomal RNA small subunit methyltransferase B.